Consider the following 558-residue polypeptide: Arginine--tRNA ligase (558 aa).

A 'HIGH' region motif is present at residues 134–144; sequence ANPTGPMVLVQ.

It belongs to the class-I aminoacyl-tRNA synthetase family. Monomer.

It is found in the cytoplasm. The enzyme catalyses tRNA(Arg) + L-arginine + ATP = L-arginyl-tRNA(Arg) + AMP + diphosphate. This Symbiobacterium thermophilum (strain DSM 24528 / JCM 14929 / IAM 14863 / T) protein is Arginine--tRNA ligase.